The sequence spans 129 residues: UPF0325 protein HCH_00487 (129 aa).

It belongs to the UPF0325 family.

The protein is UPF0325 protein HCH_00487 of Hahella chejuensis (strain KCTC 2396).